We begin with the raw amino-acid sequence, 490 residues long: Aspartyl/glutamyl-tRNA(Asn/Gln) amidotransferase subunit B (490 aa).

Belongs to the GatB/GatE family. GatB subfamily. In terms of assembly, heterotrimer of A, B and C subunits.

The enzyme catalyses L-glutamyl-tRNA(Gln) + L-glutamine + ATP + H2O = L-glutaminyl-tRNA(Gln) + L-glutamate + ADP + phosphate + H(+). The catalysed reaction is L-aspartyl-tRNA(Asn) + L-glutamine + ATP + H2O = L-asparaginyl-tRNA(Asn) + L-glutamate + ADP + phosphate + 2 H(+). In terms of biological role, allows the formation of correctly charged Asn-tRNA(Asn) or Gln-tRNA(Gln) through the transamidation of misacylated Asp-tRNA(Asn) or Glu-tRNA(Gln) in organisms which lack either or both of asparaginyl-tRNA or glutaminyl-tRNA synthetases. The reaction takes place in the presence of glutamine and ATP through an activated phospho-Asp-tRNA(Asn) or phospho-Glu-tRNA(Gln). This chain is Aspartyl/glutamyl-tRNA(Asn/Gln) amidotransferase subunit B, found in Burkholderia vietnamiensis (strain G4 / LMG 22486) (Burkholderia cepacia (strain R1808)).